The following is a 363-amino-acid chain: Putative agmatine deiminase 1 (363 aa).

Cys-356 acts as the Amidino-cysteine intermediate in catalysis.

It belongs to the agmatine deiminase family.

The catalysed reaction is agmatine + H2O = N-carbamoylputrescine + NH4(+). This Listeria monocytogenes serovar 1/2a (strain ATCC BAA-679 / EGD-e) protein is Putative agmatine deiminase 1.